A 208-amino-acid polypeptide reads, in one-letter code: CASP-like protein 2U9 (208 aa).

The Cytoplasmic segment spans residues 1–27 (MGVADAPSPGNVPVLGDMKNRSAAEMK). Residues 28 to 48 (ISVLALRALTLVLLVIALALM) form a helical membrane-spanning segment. Residues 49–87 (VSNKQTQSIPIKLPGMASTIFLKKTATFSQITGVQYYVG) lie on the Extracellular side of the membrane. Residues 88–108 (ALSVAVAYMFFQMLAGLFTIL) form a helical membrane-spanning segment. At 109–120 (TTGSIVGSKSRA) the chain is on the cytoplasmic side. The chain crosses the membrane as a helical span at residues 121-141 (WVTFILDQLIAYLMVSAATVV). Residues 142-168 (AEVGYIARRGETKVGWNQVCSDFKHYC) lie on the Extracellular side of the membrane. Residues 169-189 (FIYGFSLVNAFLATIAFLPVV) form a helical membrane-spanning segment. Residues 190–208 (AVSAFHLFRMYGAQSAQSK) are Cytoplasmic-facing.

It belongs to the Casparian strip membrane proteins (CASP) family. Homodimer and heterodimers.

The protein localises to the cell membrane. This chain is CASP-like protein 2U9, found in Selaginella moellendorffii (Spikemoss).